The following is a 291-amino-acid chain: Pantothenate synthetase (291 aa).

30–37 is a binding site for ATP; sequence MGYLHVGH. Residue H37 is the Proton donor of the active site. Position 61 (Q61) interacts with (R)-pantoate. Q61 lines the beta-alanine pocket. 147–150 contacts ATP; it reads GEKD. A (R)-pantoate-binding site is contributed by Q153. ATP-binding positions include V176 and 184 to 187; that span reads CSSR.

The protein belongs to the pantothenate synthetase family. In terms of assembly, homodimer.

It is found in the cytoplasm. The catalysed reaction is (R)-pantoate + beta-alanine + ATP = (R)-pantothenate + AMP + diphosphate + H(+). It functions in the pathway cofactor biosynthesis; (R)-pantothenate biosynthesis; (R)-pantothenate from (R)-pantoate and beta-alanine: step 1/1. Catalyzes the condensation of pantoate with beta-alanine in an ATP-dependent reaction via a pantoyl-adenylate intermediate. This chain is Pantothenate synthetase, found in Sinorhizobium medicae (strain WSM419) (Ensifer medicae).